The primary structure comprises 464 residues: Siroheme synthase (464 aa).

A precorrin-2 dehydrogenase /sirohydrochlorin ferrochelatase region spans residues Met1 to Leu203. Residues Glu22–Ile23 and Pro43–Glu44 each bind NAD(+). Residue Ser128 is modified to Phosphoserine. Residues Gly216–Leu464 form a uroporphyrinogen-III C-methyltransferase region. Residue Pro225 participates in S-adenosyl-L-methionine binding. The Proton acceptor role is filled by Asp248. The active-site Proton donor is the Lys270. S-adenosyl-L-methionine-binding positions include Gly301–Asp303, Ile306, Thr331–Ala332, Met383, and Gly412.

In the N-terminal section; belongs to the precorrin-2 dehydrogenase / sirohydrochlorin ferrochelatase family. It in the C-terminal section; belongs to the precorrin methyltransferase family.

It catalyses the reaction uroporphyrinogen III + 2 S-adenosyl-L-methionine = precorrin-2 + 2 S-adenosyl-L-homocysteine + H(+). The catalysed reaction is precorrin-2 + NAD(+) = sirohydrochlorin + NADH + 2 H(+). It carries out the reaction siroheme + 2 H(+) = sirohydrochlorin + Fe(2+). The protein operates within cofactor biosynthesis; adenosylcobalamin biosynthesis; precorrin-2 from uroporphyrinogen III: step 1/1. Its pathway is cofactor biosynthesis; adenosylcobalamin biosynthesis; sirohydrochlorin from precorrin-2: step 1/1. It participates in porphyrin-containing compound metabolism; siroheme biosynthesis; precorrin-2 from uroporphyrinogen III: step 1/1. It functions in the pathway porphyrin-containing compound metabolism; siroheme biosynthesis; siroheme from sirohydrochlorin: step 1/1. The protein operates within porphyrin-containing compound metabolism; siroheme biosynthesis; sirohydrochlorin from precorrin-2: step 1/1. In terms of biological role, multifunctional enzyme that catalyzes the SAM-dependent methylations of uroporphyrinogen III at position C-2 and C-7 to form precorrin-2 via precorrin-1. Then it catalyzes the NAD-dependent ring dehydrogenation of precorrin-2 to yield sirohydrochlorin. Finally, it catalyzes the ferrochelation of sirohydrochlorin to yield siroheme. The protein is Siroheme synthase of Pseudomonas syringae pv. tomato (strain ATCC BAA-871 / DC3000).